We begin with the raw amino-acid sequence, 166 residues long: Putative 4-hydroxy-4-methyl-2-oxoglutarate aldolase (166 aa).

Residues 81–84 (GDII) and R103 contribute to the substrate site. D104 lines the a divalent metal cation pocket.

Belongs to the class II aldolase/RraA-like family. Homotrimer. It depends on a divalent metal cation as a cofactor.

It carries out the reaction 4-hydroxy-4-methyl-2-oxoglutarate = 2 pyruvate. The catalysed reaction is oxaloacetate + H(+) = pyruvate + CO2. In terms of biological role, catalyzes the aldol cleavage of 4-hydroxy-4-methyl-2-oxoglutarate (HMG) into 2 molecules of pyruvate. Also contains a secondary oxaloacetate (OAA) decarboxylase activity due to the common pyruvate enolate transition state formed following C-C bond cleavage in the retro-aldol and decarboxylation reactions. This is Putative 4-hydroxy-4-methyl-2-oxoglutarate aldolase from Corynebacterium glutamicum (strain ATCC 13032 / DSM 20300 / JCM 1318 / BCRC 11384 / CCUG 27702 / LMG 3730 / NBRC 12168 / NCIMB 10025 / NRRL B-2784 / 534).